A 56-amino-acid polypeptide reads, in one-letter code: uncharacterized protein (56 aa).

This is an uncharacterized protein from Autographa californica nuclear polyhedrosis virus (AcMNPV).